We begin with the raw amino-acid sequence, 216 residues long: MASKSVVLEAREITLAIELIELGARLQLLEAETSLSRDRLVKLYKELKGVSPPKGMLPFSTDWFMTWQPNFHSSLFYNIYRFMAGHGGCRAIESIVKSYRLYLEHVQLQDDEPVLSLTRAWTLVRFFDSGMLQLSVCRRCGGQFVAHAHDPQHAFVCGLCQPPSRAGKTKKAAQTRPERQSAVAGIPAEVPQVAEARAHEARCTAPTLDTFVTAEV.

Zn(2+) contacts are provided by cysteine 137, cysteine 140, cysteine 157, and cysteine 160.

This sequence belongs to the FlhC family. As to quaternary structure, heterohexamer composed of two FlhC and four FlhD subunits. Each FlhC binds a FlhD dimer, forming a heterotrimer, and a hexamer assembles by dimerization of two heterotrimers. It depends on Zn(2+) as a cofactor.

It is found in the cytoplasm. In terms of biological role, functions in complex with FlhD as a master transcriptional regulator that regulates transcription of several flagellar and non-flagellar operons by binding to their promoter region. Activates expression of class 2 flagellar genes, including fliA, which is a flagellum-specific sigma factor that turns on the class 3 genes. Also regulates genes whose products function in a variety of physiological pathways. The sequence is that of Flagellar transcriptional regulator FlhC from Paraburkholderia atlantica.